The sequence spans 325 residues: Tagatose 1,6-diphosphate aldolase (325 aa).

This sequence belongs to the aldolase LacD family.

The catalysed reaction is D-tagatofuranose 1,6-bisphosphate = D-glyceraldehyde 3-phosphate + dihydroxyacetone phosphate. Its pathway is carbohydrate metabolism; D-tagatose 6-phosphate degradation; D-glyceraldehyde 3-phosphate and glycerone phosphate from D-tagatose 6-phosphate: step 2/2. This Staphylococcus epidermidis (strain ATCC 12228 / FDA PCI 1200) protein is Tagatose 1,6-diphosphate aldolase.